The sequence spans 117 residues: Probable prefoldin subunit 1 (117 aa).

Belongs to the prefoldin subunit beta family. In terms of assembly, heterohexamer of two PFD-alpha type and four PFD-beta type subunits.

It is found in the cytoplasm. Its function is as follows. Binds specifically to cytosolic chaperonin (c-CPN) and transfers target proteins to it. Binds to nascent polypeptide chain and promotes folding in an environment in which there are many competing pathways for nonnative proteins. Has a role in gonadogenesis. This Caenorhabditis briggsae protein is Probable prefoldin subunit 1 (pfd-1).